The sequence spans 304 residues: Methionyl-tRNA formyltransferase (304 aa).

110-113 is a binding site for (6S)-5,6,7,8-tetrahydrofolate; that stretch reads SLLP.

This sequence belongs to the Fmt family.

It carries out the reaction L-methionyl-tRNA(fMet) + (6R)-10-formyltetrahydrofolate = N-formyl-L-methionyl-tRNA(fMet) + (6S)-5,6,7,8-tetrahydrofolate + H(+). Attaches a formyl group to the free amino group of methionyl-tRNA(fMet). The formyl group appears to play a dual role in the initiator identity of N-formylmethionyl-tRNA by promoting its recognition by IF2 and preventing the misappropriation of this tRNA by the elongation apparatus. This is Methionyl-tRNA formyltransferase from Sulfurovum sp. (strain NBC37-1).